The primary structure comprises 877 residues: DNA (cytosine-5)-methyltransferase 3A (877 aa).

3 disordered regions span residues 1–154, 194–250, and 412–431; these read MVES…MQRH, EETP…PEYE, and AYAPPPPAKKPRKSTTEKPK. Composition is skewed to basic and acidic residues over residues 107–133 and 195–206; these read KLLEATEKSKEEKEENNFDSLKMEGSR and ETPRAEPQKEEE. The span at 210–225 shows a compositional bias: polar residues; the sequence is PASQQPTDPASPNVAT. In terms of domain architecture, PWWP spans 226–284; sequence TPEPVVADAVDKNTSKSADDEPEYEDGRGLGIGELVWGKLRGFSWWPGRIVSWWMTGRS. Over residues 234 to 244 the composition is skewed to basic and acidic residues; it reads AVDKNTSKSAD. One can recognise an ADD domain in the interval 447–579; that stretch reads EVRQKCRNIE…LQMFFANNHD (133 aa). The GATA-type; atypical zinc-finger motif lies at 458–488; the sequence is ICISCGSLNVTLEHPLFIGGMCQNCKNCFLE. Residues 499–555 form a PHD-type; atypical zinc finger; the sequence is QSYCTICCGGREVLMCGNNNCCRCFCVECVDLLVGPGAAQAAIKEDPWNCYMCGHKG. The SAM-dependent MTase C5-type domain maps to 599–877; sequence IRVLSLFDGI…APLKEYFACV (279 aa). Residues 606-610, Glu-629, and 651-653 contribute to the S-adenosyl-L-methionine site; these read DGIAT and DVR. Cys-675 is an active-site residue. Residue 856–858 coordinates S-adenosyl-L-methionine; sequence RSW.

Belongs to the class I-like SAM-binding methyltransferase superfamily. C5-methyltransferase family.

The protein resides in the nucleus. It localises to the chromosome. The protein localises to the cytoplasm. The catalysed reaction is a 2'-deoxycytidine in DNA + S-adenosyl-L-methionine = a 5-methyl-2'-deoxycytidine in DNA + S-adenosyl-L-homocysteine + H(+). It catalyses the reaction L-cysteinyl-[protein] + S-adenosyl-L-methionine = S-methyl-L-cysteinyl-[protein] + S-adenosyl-L-homocysteine + H(+). Functionally, required for genome-wide de novo methylation and is essential for development. DNA methylation is coordinated with methylation of histones. It modifies DNA in a non-processive manner and also methylates non-CpG sites. Acts as a transcriptional corepressor for ZNF238. Can actively repress transcription through the recruitment of HDAC activity. Also has weak auto-methylation activity on some Cys residue in absence of DNA. This chain is DNA (cytosine-5)-methyltransferase 3A (DNMT3A), found in Gallus gallus (Chicken).